The sequence spans 148 residues: FAD synthase (148 aa).

ATP is bound by residues 14–15 (VF), 19–22 (HVGH), and Asp100.

This sequence belongs to the archaeal FAD synthase family. Homodimer. Requires a divalent metal cation as cofactor.

It catalyses the reaction FMN + ATP + H(+) = FAD + diphosphate. Its pathway is cofactor biosynthesis; FAD biosynthesis; FAD from FMN: step 1/1. Functionally, catalyzes the transfer of the AMP portion of ATP to flavin mononucleotide (FMN) to produce flavin adenine dinucleotide (FAD) coenzyme. This Pyrococcus abyssi (strain GE5 / Orsay) protein is FAD synthase.